A 93-amino-acid chain; its full sequence is NADH-dependent phenylglyoxylate dehydrogenase subunit delta (93 aa).

2 4Fe-4S ferredoxin-type domains span residues 39–68 and 66–93; these read MRPV…EHAA and HAAW…RRSR.

Dimer of heteropentamers composed of an alpha (PadG), a beta (PadI), a gamma (PadE), a delta (PadF) and an epsilon (PadH) subunit. It depends on [4Fe-4S] cluster as a cofactor.

It carries out the reaction phenylglyoxylate + NAD(+) + CoA = benzoyl-CoA + CO2 + NADH. With respect to regulation, activated by magnesium ions and thiamine diphosphate. Functionally, involved in the anaerobic metabolism of phenylalanine and phenylacetate. Catalyzes the oxidative decarboxylation of phenylglyoxylate to benzoyl-CoA and CO(2). It can also react slowly with 2-oxo-3-methylbutanoate and use different electron acceptors such as benzyl viologen, methyl viologen, FAD or FMN, but NAD seems to be the physiological electron acceptor. Also catalyzes an isotope exchange between CO(2) and the carboxyl group which proves partial or complete reversibility of the oxidative decarboxylation reaction. The protein is NADH-dependent phenylglyoxylate dehydrogenase subunit delta (padF) of Aromatoleum evansii (Azoarcus evansii).